A 188-amino-acid polypeptide reads, in one-letter code: uncharacterized protein (188 aa).

The disordered stretch occupies residues 121–142 (ADTLSRKNKRSSDQKRNGQHFE). Residues 130–142 (RSSDQKRNGQHFE) show a composition bias toward basic and acidic residues.

It belongs to the chlamydial CPn_0422/CT_273/TC_0545 family.

This is an uncharacterized protein from Chlamydia trachomatis serovar D (strain ATCC VR-885 / DSM 19411 / UW-3/Cx).